The sequence spans 60 residues: Large ribosomal subunit protein uL30 (60 aa).

Belongs to the universal ribosomal protein uL30 family. In terms of assembly, part of the 50S ribosomal subunit.

This is Large ribosomal subunit protein uL30 from Shewanella baltica (strain OS223).